The following is a 334-amino-acid chain: Holliday junction branch migration complex subunit RuvB (334 aa).

The large ATPase domain (RuvB-L) stretch occupies residues 4 to 184 (ADRLIQPQLQ…FGIPLRLEFY (181 aa)). Residues Arg-24, Gly-65, Lys-68, Thr-69, Thr-70, 131-133 (EDY), Arg-174, Tyr-184, and Arg-221 contribute to the ATP site. Residue Thr-69 participates in Mg(2+) binding. The tract at residues 185–255 (NVKDLSTIVT…VAELALNLLD (71 aa)) is small ATPAse domain (RuvB-S). The head domain (RuvB-H) stretch occupies residues 258-334 (GEGFDYMDRK…YVHFGMIKPE (77 aa)). 3 residues coordinate DNA: Arg-294, Arg-313, and Arg-318.

It belongs to the RuvB family. As to quaternary structure, homohexamer. Forms an RuvA(8)-RuvB(12)-Holliday junction (HJ) complex. HJ DNA is sandwiched between 2 RuvA tetramers; dsDNA enters through RuvA and exits via RuvB. An RuvB hexamer assembles on each DNA strand where it exits the tetramer. Each RuvB hexamer is contacted by two RuvA subunits (via domain III) on 2 adjacent RuvB subunits; this complex drives branch migration. In the full resolvosome a probable DNA-RuvA(4)-RuvB(12)-RuvC(2) complex forms which resolves the HJ.

The protein localises to the cytoplasm. It catalyses the reaction ATP + H2O = ADP + phosphate + H(+). Functionally, the RuvA-RuvB-RuvC complex processes Holliday junction (HJ) DNA during genetic recombination and DNA repair, while the RuvA-RuvB complex plays an important role in the rescue of blocked DNA replication forks via replication fork reversal (RFR). RuvA specifically binds to HJ cruciform DNA, conferring on it an open structure. The RuvB hexamer acts as an ATP-dependent pump, pulling dsDNA into and through the RuvAB complex. RuvB forms 2 homohexamers on either side of HJ DNA bound by 1 or 2 RuvA tetramers; 4 subunits per hexamer contact DNA at a time. Coordinated motions by a converter formed by DNA-disengaged RuvB subunits stimulates ATP hydrolysis and nucleotide exchange. Immobilization of the converter enables RuvB to convert the ATP-contained energy into a lever motion, pulling 2 nucleotides of DNA out of the RuvA tetramer per ATP hydrolyzed, thus driving DNA branch migration. The RuvB motors rotate together with the DNA substrate, which together with the progressing nucleotide cycle form the mechanistic basis for DNA recombination by continuous HJ branch migration. Branch migration allows RuvC to scan DNA until it finds its consensus sequence, where it cleaves and resolves cruciform DNA. In Shewanella oneidensis (strain ATCC 700550 / JCM 31522 / CIP 106686 / LMG 19005 / NCIMB 14063 / MR-1), this protein is Holliday junction branch migration complex subunit RuvB.